Consider the following 265-residue polypeptide: 5'-nucleotidase SurE (265 aa).

4 residues coordinate a divalent metal cation: Asp8, Asp9, Ser39, and Asn96.

This sequence belongs to the SurE nucleotidase family. A divalent metal cation serves as cofactor.

The protein resides in the cytoplasm. It carries out the reaction a ribonucleoside 5'-phosphate + H2O = a ribonucleoside + phosphate. Its function is as follows. Nucleotidase that shows phosphatase activity on nucleoside 5'-monophosphates. The polypeptide is 5'-nucleotidase SurE (Rubrobacter xylanophilus (strain DSM 9941 / JCM 11954 / NBRC 16129 / PRD-1)).